The chain runs to 103 residues: Co-chaperonin GroES (103 aa).

It belongs to the GroES chaperonin family. In terms of assembly, heptamer of 7 subunits arranged in a ring. Interacts with the chaperonin GroEL.

It is found in the cytoplasm. Its function is as follows. Together with the chaperonin GroEL, plays an essential role in assisting protein folding. The GroEL-GroES system forms a nano-cage that allows encapsulation of the non-native substrate proteins and provides a physical environment optimized to promote and accelerate protein folding. GroES binds to the apical surface of the GroEL ring, thereby capping the opening of the GroEL channel. This is Co-chaperonin GroES from Prochlorococcus marinus (strain MIT 9515).